Reading from the N-terminus, the 167-residue chain is Ribosome maturation factor RimM (167 aa).

The PRC barrel domain maps to 94–165; that stretch reads ENEFYYSDII…KIIITPMEGL (72 aa).

Belongs to the RimM family. In terms of assembly, binds ribosomal protein uS19.

It is found in the cytoplasm. An accessory protein needed during the final step in the assembly of 30S ribosomal subunit, possibly for assembly of the head region. Essential for efficient processing of 16S rRNA. May be needed both before and after RbfA during the maturation of 16S rRNA. It has affinity for free ribosomal 30S subunits but not for 70S ribosomes. The protein is Ribosome maturation factor RimM of Staphylococcus aureus (strain Mu3 / ATCC 700698).